The chain runs to 120 residues: Large ribosomal subunit protein uL18 (120 aa).

Belongs to the universal ribosomal protein uL18 family. Part of the 50S ribosomal subunit; part of the 5S rRNA/L5/L18/L25 subcomplex. Contacts the 5S and 23S rRNAs.

Functionally, this is one of the proteins that bind and probably mediate the attachment of the 5S RNA into the large ribosomal subunit, where it forms part of the central protuberance. This is Large ribosomal subunit protein uL18 from Chloroflexus aurantiacus (strain ATCC 29364 / DSM 637 / Y-400-fl).